The primary structure comprises 299 residues: ATP synthase gamma chain (299 aa).

It belongs to the ATPase gamma chain family. F-type ATPases have 2 components, CF(1) - the catalytic core - and CF(0) - the membrane proton channel. CF(1) has five subunits: alpha(3), beta(3), gamma(1), delta(1), epsilon(1). CF(0) has three main subunits: a, b and c.

It localises to the cell inner membrane. Functionally, produces ATP from ADP in the presence of a proton gradient across the membrane. The gamma chain is believed to be important in regulating ATPase activity and the flow of protons through the CF(0) complex. This chain is ATP synthase gamma chain, found in Rhodospirillum rubrum.